We begin with the raw amino-acid sequence, 306 residues long: tRNA dimethylallyltransferase 2 (306 aa).

Glycine 19–threonine 26 is a binding site for ATP. Threonine 21–threonine 26 provides a ligand contact to substrate. An interaction with substrate tRNA region spans residues aspartate 44–glutamine 47.

Belongs to the IPP transferase family. In terms of assembly, monomer. The cofactor is Mg(2+).

It catalyses the reaction adenosine(37) in tRNA + dimethylallyl diphosphate = N(6)-dimethylallyladenosine(37) in tRNA + diphosphate. Catalyzes the transfer of a dimethylallyl group onto the adenine at position 37 in tRNAs that read codons beginning with uridine, leading to the formation of N6-(dimethylallyl)adenosine (i(6)A). In Citrifermentans bemidjiense (strain ATCC BAA-1014 / DSM 16622 / JCM 12645 / Bem) (Geobacter bemidjiensis), this protein is tRNA dimethylallyltransferase 2.